Reading from the N-terminus, the 178-residue chain is Large ribosomal subunit protein bL25 (178 aa).

The protein belongs to the bacterial ribosomal protein bL25 family. CTC subfamily. As to quaternary structure, part of the 50S ribosomal subunit; part of the 5S rRNA/L5/L18/L25 subcomplex. Contacts the 5S rRNA. Binds to the 5S rRNA independently of L5 and L18.

Functionally, this is one of the proteins that binds to the 5S RNA in the ribosome where it forms part of the central protuberance. The sequence is that of Large ribosomal subunit protein bL25 from Campylobacter jejuni subsp. jejuni serotype O:6 (strain 81116 / NCTC 11828).